The chain runs to 360 residues: Peptide chain release factor 1 (360 aa).

Position 235 is an N5-methylglutamine (Q235). The interval 281–310 is disordered; sequence AERQRQDAAQAESRRLQVGSGDRSQRIRTY.

It belongs to the prokaryotic/mitochondrial release factor family. Methylated by PrmC. Methylation increases the termination efficiency of RF1.

The protein resides in the cytoplasm. Functionally, peptide chain release factor 1 directs the termination of translation in response to the peptide chain termination codons UAG and UAA. In Stenotrophomonas maltophilia (strain K279a), this protein is Peptide chain release factor 1.